The sequence spans 116 residues: Prefoldin subunit beta (116 aa).

It belongs to the prefoldin subunit beta family. In terms of assembly, heterohexamer of two alpha and four beta subunits.

The protein resides in the cytoplasm. Functionally, molecular chaperone capable of stabilizing a range of proteins. Seems to fulfill an ATP-independent, HSP70-like function in archaeal de novo protein folding. The polypeptide is Prefoldin subunit beta (Methanobrevibacter smithii (strain ATCC 35061 / DSM 861 / OCM 144 / PS)).